Consider the following 432-residue polypeptide: Methylenetetrahydrofolate--tRNA-(uracil-5-)-methyltransferase TrmFO (432 aa).

7 to 12 (GGGLAG) contacts FAD.

This sequence belongs to the MnmG family. TrmFO subfamily. The cofactor is FAD.

It is found in the cytoplasm. It catalyses the reaction uridine(54) in tRNA + (6R)-5,10-methylene-5,6,7,8-tetrahydrofolate + NADH + H(+) = 5-methyluridine(54) in tRNA + (6S)-5,6,7,8-tetrahydrofolate + NAD(+). It carries out the reaction uridine(54) in tRNA + (6R)-5,10-methylene-5,6,7,8-tetrahydrofolate + NADPH + H(+) = 5-methyluridine(54) in tRNA + (6S)-5,6,7,8-tetrahydrofolate + NADP(+). In terms of biological role, catalyzes the folate-dependent formation of 5-methyl-uridine at position 54 (M-5-U54) in all tRNAs. This chain is Methylenetetrahydrofolate--tRNA-(uracil-5-)-methyltransferase TrmFO, found in Coprothermobacter proteolyticus (strain ATCC 35245 / DSM 5265 / OCM 4 / BT).